Here is a 362-residue protein sequence, read N- to C-terminus: GMP reductase (362 aa).

NADP(+)-binding positions include 26–27 (SR), Lys78, 129–131 (DVA), and 180–181 (IG). Residues Gly181, Gly183, and Cys186 each contribute to the K(+) site. Cys186 functions as the Thioimidate intermediate in the catalytic mechanism. The Proton donor/acceptor role is filled by Thr188. Arg189 is a K(+) binding site. Residues 219 to 221 (DGG), 242 to 243 (GG), 268 to 270 (GMS), and 286 to 290 (RASEG) contribute to the GMP site. NADP(+) is bound by residues Met269, 285–286 (YR), and 314–317 (STCT).

Belongs to the IMPDH/GMPR family.

It catalyses the reaction IMP + NH4(+) + NADP(+) = GMP + NADPH + 2 H(+). Functionally, catalyzes the irreversible NADPH-dependent deamination of GMP to IMP. It functions in the conversion of nucleobase, nucleoside and nucleotide derivatives of G to A nucleotides, and in maintaining the intracellular balance of A and G nucleotides. In Phytophthora infestans (Potato late blight agent), this protein is GMP reductase.